The chain runs to 252 residues: uncharacterized protein (252 aa).

Positions 1 to 23 (MKLLKTVPAIVMLAGGMFASLNA) are cleaved as a signal peptide. The disordered stretch occupies residues 231-252 (EPPESAPEHTDRRTTLSLGYSM).

This is an uncharacterized protein from Escherichia coli (strain K12).